Here is a 138-residue protein sequence, read N- to C-terminus: Large ribosomal subunit protein uL16 (138 aa).

A compositionally biased stretch (basic residues) spans 1 to 16 (MLIPRRVKHRKQHHPS). The tract at residues 1–25 (MLIPRRVKHRKQHHPSRSGAAKGGT) is disordered.

It belongs to the universal ribosomal protein uL16 family. In terms of assembly, part of the 50S ribosomal subunit.

Functionally, binds 23S rRNA and is also seen to make contacts with the A and possibly P site tRNAs. The sequence is that of Large ribosomal subunit protein uL16 from Rhodococcus jostii (strain RHA1).